We begin with the raw amino-acid sequence, 381 residues long: Glucose-1-phosphate adenylyltransferase (381 aa).

Alpha-D-glucose 1-phosphate-binding positions include Tyr-100, Gly-165, 180-181, and Ser-191; that span reads EK.

Belongs to the bacterial/plant glucose-1-phosphate adenylyltransferase family. Homotetramer.

The catalysed reaction is alpha-D-glucose 1-phosphate + ATP + H(+) = ADP-alpha-D-glucose + diphosphate. It participates in glycan biosynthesis; glycogen biosynthesis. Involved in the biosynthesis of ADP-glucose, a building block required for the elongation reactions to produce glycogen. Catalyzes the reaction between ATP and alpha-D-glucose 1-phosphate (G1P) to produce pyrophosphate and ADP-Glc. The chain is Glucose-1-phosphate adenylyltransferase from Mycoplasma mobile (strain ATCC 43663 / 163K / NCTC 11711) (Mesomycoplasma mobile).